We begin with the raw amino-acid sequence, 753 residues long: Replication restart protein PriA (753 aa).

The Helicase ATP-binding domain occupies 228-395 (SLVAEQFQTC…LSKKYTLSVL (168 aa)). ATP is bound at residue 241–248 (GVTGSGKT). A DEAH box motif is present at residues 337–340 (DEEH). Zn(2+)-binding residues include Cys-458, Cys-461, Cys-467, Cys-470, Cys-485, Cys-488, Cys-499, and Cys-502. Residues 491–646 (RLSKPITSCP…DFPAFYKEEI (156 aa)) enclose the Helicase C-terminal domain.

Belongs to the helicase family. PriA subfamily. Component of the replication restart primosome. Zn(2+) serves as cofactor.

It carries out the reaction Couples ATP hydrolysis with the unwinding of duplex DNA by translocating in the 3'-5' direction.. The enzyme catalyses ATP + H2O = ADP + phosphate + H(+). Its function is as follows. Initiates the restart of stalled replication forks, which reloads the replicative helicase on sites other than the origin of replication. Recognizes and binds to abandoned replication forks and remodels them to uncover a helicase loading site. Promotes assembly of the primosome at these replication forks. The protein is Replication restart protein PriA of Chlamydia trachomatis serovar D (strain ATCC VR-885 / DSM 19411 / UW-3/Cx).